Consider the following 397-residue polypeptide: DnaJ protein homolog 1 (397 aa).

Residues 1–52 (KNASPDDLKKAYRKAAIKNHPDKGGDPEKFKELAQAYDVLSDPEKREIYDQY) enclose the J domain. Residues 114–198 (GTSKKLSLSR…CKGEKVVQEK (85 aa)) form a CR-type zinc finger. CXXCXGXG motif repeat units lie at residues 127-134 (CSKCNGKG), 143-150 (CASCQGSG), 170-177 (CNDCKGTG), and 186-193 (CPLCKGEK). Residues 367 to 397 (MRRKQHQHAQEAYDEDDEGHGGGQRVQCAQQ) form a disordered region. Cysteine 394 carries the cysteine methyl ester modification. A lipid anchor (S-farnesyl cysteine) is attached at cysteine 394. A propeptide spans 395 to 397 (AQQ) (removed in mature form).

Its subcellular location is the membrane. In terms of biological role, plays a continuous role in plant development probably in the structural organization of compartments. The polypeptide is DnaJ protein homolog 1 (DNAJ1) (Allium porrum (Leek)).